The primary structure comprises 134 residues: Cytochrome b (134 aa).

The next 3 membrane-spanning stretches (helical) occupy residues 33–53, 77–98, and 113–133; these read FGSL…FLAM, WVLR…YVHV, and WNVG…GYVL. Residues His-83 and His-97 each coordinate heme b.

The protein belongs to the cytochrome b family. In terms of assembly, the cytochrome bc1 complex contains 11 subunits: 3 respiratory subunits (MT-CYB, CYC1 and UQCRFS1), 2 core proteins (UQCRC1 and UQCRC2) and 6 low-molecular weight proteins (UQCRH/QCR6, UQCRB/QCR7, UQCRQ/QCR8, UQCR10/QCR9, UQCR11/QCR10 and a cleavage product of UQCRFS1). This cytochrome bc1 complex then forms a dimer. It depends on heme b as a cofactor.

Its subcellular location is the mitochondrion inner membrane. Component of the ubiquinol-cytochrome c reductase complex (complex III or cytochrome b-c1 complex) that is part of the mitochondrial respiratory chain. The b-c1 complex mediates electron transfer from ubiquinol to cytochrome c. Contributes to the generation of a proton gradient across the mitochondrial membrane that is then used for ATP synthesis. This Anoura caudifer (Hairy-legged long-tongued bat) protein is Cytochrome b (MT-CYB).